Here is a 279-residue protein sequence, read N- to C-terminus: MQNHVISLASAAERRAHITDTFGVRGIPFQFFDALMPSERLEQAMAELVPGLSAHPYLSGVEKACFMSHAVLWKQALDEGLPYIAVFEDDVLLGEGAEKFLAEDAWLQERFDPDSAFIVRLETMFMHVLTSPSGVADYCGRAFPLLESEHWGTAGYIISRKAMWFFLDRFAALPSEGLHPVDWMMFGNPDDRERMPVCQLNPALCAQELHYAKFHDQNSALGSLIEHDRCLNSKQQRRDSPANTFKHRLIRALTKISREREKRRQRREQLIGKIIVPFQ.

It belongs to the glycosyltransferase 25 family.

The protein operates within glycan metabolism; lacto-N-neotetraose biosynthesis. It participates in bacterial outer membrane biogenesis; lipooligosaccharide biosynthesis. In terms of biological role, adds the second galactose to the lacto-N-tetraose chain in lipooligosaccharide (LOS). The protein is Lacto-N-neotetraose biosynthesis glycosyltransferase LgtB (lgtB) of Neisseria meningitidis serogroup A / serotype 4A (strain DSM 15465 / Z2491).